The following is a 209-amino-acid chain: Endoplasmic reticulum vesicle protein 25 (209 aa).

The first 18 residues, 1–18 (MKYTTFGIISLFLSVTWA), serve as a signal peptide directing secretion. Residues 19–178 (LRFELAASFE…TNESTNRRVR (160 aa)) are Lumenal-facing. The 89-residue stretch at 31–119 (PFCIRDFVEA…MRNVEVNIES (89 aa)) folds into the GOLD domain. The helical transmembrane segment at 179 to 199 (NFSMAVIVVFAALCAWQLNYL) threads the bilayer. Topologically, residues 200-209 (KNYFRAKHII) are cytoplasmic.

It belongs to the EMP24/GP25L family.

The protein localises to the endoplasmic reticulum membrane. It is found in the golgi apparatus membrane. Functionally, constituent of COPII-coated endoplasmic reticulum-derived transport vesicles. Required for efficient transport of a subset of secretory proteins to the Golgi. Facilitates retrograde transport from the Golgi to the endoplasmic reticulum. The chain is Endoplasmic reticulum vesicle protein 25 (ERV25) from Eremothecium gossypii (strain ATCC 10895 / CBS 109.51 / FGSC 9923 / NRRL Y-1056) (Yeast).